The primary structure comprises 472 residues: 3-isopropylmalate dehydratase large subunit (472 aa).

3 residues coordinate [4Fe-4S] cluster: Cys347, Cys407, and Cys410.

The protein belongs to the aconitase/IPM isomerase family. LeuC type 1 subfamily. Heterodimer of LeuC and LeuD. [4Fe-4S] cluster is required as a cofactor.

It carries out the reaction (2R,3S)-3-isopropylmalate = (2S)-2-isopropylmalate. It participates in amino-acid biosynthesis; L-leucine biosynthesis; L-leucine from 3-methyl-2-oxobutanoate: step 2/4. In terms of biological role, catalyzes the isomerization between 2-isopropylmalate and 3-isopropylmalate, via the formation of 2-isopropylmaleate. This is 3-isopropylmalate dehydratase large subunit from Bacillus velezensis (strain DSM 23117 / BGSC 10A6 / LMG 26770 / FZB42) (Bacillus amyloliquefaciens subsp. plantarum).